The following is a 453-amino-acid chain: UDP-glycosyltransferase 74E1 (453 aa).

Residues serine 279, 332–334, 349–357, and 371–374 contribute to the UDP-alpha-D-glucose site; these read SPQ, HCGWNSTLE, and WADQ.

The protein belongs to the UDP-glycosyltransferase family.

The sequence is that of UDP-glycosyltransferase 74E1 (UGT74E1) from Arabidopsis thaliana (Mouse-ear cress).